A 243-amino-acid polypeptide reads, in one-letter code: Glycerophosphodiester phosphodiesterase (243 aa).

A GP-PDE domain is found at 3 to 239; it reads TLVIAHRGDS…DDPETLINLV (237 aa). Catalysis depends on H8, which acts as the Proton acceptor. Residues E35 and D37 each contribute to the Ca(2+) site. H50 functions as the Proton donor in the catalytic mechanism. E110 provides a ligand contact to Ca(2+).

It belongs to the glycerophosphoryl diester phosphodiesterase family. As to quaternary structure, homodimer. The cofactor is Mg(2+). Ca(2+) serves as cofactor.

It catalyses the reaction a sn-glycero-3-phosphodiester + H2O = an alcohol + sn-glycerol 3-phosphate + H(+). It carries out the reaction sn-glycerol 3-phosphocholine + H2O = sn-glycerol 3-phosphate + choline + H(+). Inhibited by EDTA. Glycerophosphodiester phosphodiesterase hydrolyzes glycerophosphodiesters into glycerol-3-phosphate (G3P) and the corresponding alcohol. Can use glycerophosphocholine. The sequence is that of Glycerophosphodiester phosphodiesterase from Caldanaerobacter subterraneus subsp. tengcongensis (strain DSM 15242 / JCM 11007 / NBRC 100824 / MB4) (Thermoanaerobacter tengcongensis).